Here is a 454-residue protein sequence, read N- to C-terminus: Ribosomal protein uS12 methylthiotransferase RimO (454 aa).

Residues Ser14 to Lys125 form the MTTase N-terminal domain. Residues Cys23, Cys59, Cys88, Cys163, Cys167, and Cys170 each contribute to the [4Fe-4S] cluster site. Positions Asp149 to Asp378 constitute a Radical SAM core domain. One can recognise a TRAM domain in the interval Gln381–Lys452.

Belongs to the methylthiotransferase family. RimO subfamily. It depends on [4Fe-4S] cluster as a cofactor.

It localises to the cytoplasm. The enzyme catalyses L-aspartate(89)-[ribosomal protein uS12]-hydrogen + (sulfur carrier)-SH + AH2 + 2 S-adenosyl-L-methionine = 3-methylsulfanyl-L-aspartate(89)-[ribosomal protein uS12]-hydrogen + (sulfur carrier)-H + 5'-deoxyadenosine + L-methionine + A + S-adenosyl-L-homocysteine + 2 H(+). Catalyzes the methylthiolation of an aspartic acid residue of ribosomal protein uS12. This chain is Ribosomal protein uS12 methylthiotransferase RimO, found in Prochlorococcus marinus (strain MIT 9312).